The following is a 217-amino-acid chain: MSSDFEGYEQDFAVLTAEITSKIARVPRLPPDEKKQMVANVEKQLEEAKELLEQMDLEVREIPPQSRGMYSNRMRSYKQEMGKLETDFKRSRIAYSDEVRNELLGDDGNSSENQRAHLLDNTERLERSSRRLEAGYQIAVETEQIGQEMLENLSHDREKIQRARERLRETDANLGKSSRILTGMLRRIIQNRILLVILGIIVVITILMAITFSVRRH.

Topologically, residues methionine 1–arginine 192 are cytoplasmic. Coiled coils occupy residues proline 31–arginine 92 and glutamate 112–serine 178. A helical membrane pass occupies residues isoleucine 193–serine 213. Topologically, residues valine 214–histidine 217 are extracellular.

This sequence belongs to the VTI1 family. Interacts with distinct SNARE complexes that contain either STX5 or STX6. Interacts with NAPA and, to a lesser extent, with NAPG. Identified in a complex containing STX6, STX12, VAMP4 and VTI1A.

Its subcellular location is the cytoplasmic vesicle. The protein resides in the golgi apparatus membrane. In terms of biological role, V-SNARE that mediates vesicle transport pathways through interactions with t-SNAREs on the target membrane. These interactions are proposed to mediate aspects of the specificity of vesicle trafficking and to promote fusion of the lipid bilayers. Involved in vesicular transport from the late endosomes to the trans-Golgi network. Along with VAMP7, involved in an non-conventional RAB1-dependent traffic route to the cell surface used by KCNIP1 and KCND2. May be involved in increased cytokine secretion associated with cellular senescence. The chain is Vesicle transport through interaction with t-SNAREs homolog 1A (VTI1A) from Homo sapiens (Human).